A 1024-amino-acid chain; its full sequence is Error-prone DNA polymerase (1024 aa).

It belongs to the DNA polymerase type-C family. DnaE2 subfamily.

The protein resides in the cytoplasm. The enzyme catalyses DNA(n) + a 2'-deoxyribonucleoside 5'-triphosphate = DNA(n+1) + diphosphate. In terms of biological role, DNA polymerase involved in damage-induced mutagenesis and translesion synthesis (TLS). It is not the major replicative DNA polymerase. The sequence is that of Error-prone DNA polymerase from Pseudomonas paraeruginosa (strain DSM 24068 / PA7) (Pseudomonas aeruginosa (strain PA7)).